A 623-amino-acid polypeptide reads, in one-letter code: Glutathione import ATP-binding protein GsiA (623 aa).

2 ABC transporter domains span residues 18–272 and 317–567; these read VRNL…QGLL and LQVS…RKLM. ATP contacts are provided by residues 52-59 and 360-367; these read GESGSGKS and GESGCGKS.

This sequence belongs to the ABC transporter superfamily. Glutathione importer (TC 3.A.1.5.11) family. As to quaternary structure, the complex is composed of two ATP-binding proteins (GsiA), two transmembrane proteins (GsiC and GsiD) and a solute-binding protein (GsiB).

The protein resides in the cell inner membrane. The catalysed reaction is glutathione(out) + ATP + H2O = glutathione(in) + ADP + phosphate + H(+). Its function is as follows. Part of the ABC transporter complex GsiABCD involved in glutathione import. Responsible for energy coupling to the transport system. The polypeptide is Glutathione import ATP-binding protein GsiA (Pectobacterium atrosepticum (strain SCRI 1043 / ATCC BAA-672) (Erwinia carotovora subsp. atroseptica)).